Reading from the N-terminus, the 179-residue chain is Inner membrane-spanning protein YciB (179 aa).

A run of 5 helical transmembrane segments spans residues 3 to 23 (FLYD…FGIY), 49 to 69 (NALI…LWLQ), 76 to 96 (WKPT…QWLF), 119 to 139 (LNLA…YVAY), and 149 to 169 (FKLF…TLLL).

Belongs to the YciB family.

The protein localises to the cell inner membrane. Its function is as follows. Plays a role in cell envelope biogenesis, maintenance of cell envelope integrity and membrane homeostasis. The sequence is that of Inner membrane-spanning protein YciB from Methylobacillus flagellatus (strain ATCC 51484 / DSM 6875 / VKM B-1610 / KT).